The following is a 234-amino-acid chain: 1-(5-phosphoribosyl)-5-[(5-phosphoribosylamino)methylideneamino] imidazole-4-carboxamide isomerase (234 aa).

Aspartate 8 (proton acceptor) is an active-site residue. Catalysis depends on aspartate 128, which acts as the Proton donor.

It belongs to the HisA/HisF family.

It localises to the cytoplasm. The enzyme catalyses 1-(5-phospho-beta-D-ribosyl)-5-[(5-phospho-beta-D-ribosylamino)methylideneamino]imidazole-4-carboxamide = 5-[(5-phospho-1-deoxy-D-ribulos-1-ylimino)methylamino]-1-(5-phospho-beta-D-ribosyl)imidazole-4-carboxamide. Its pathway is amino-acid biosynthesis; L-histidine biosynthesis; L-histidine from 5-phospho-alpha-D-ribose 1-diphosphate: step 4/9. This Cenarchaeum symbiosum (strain A) protein is 1-(5-phosphoribosyl)-5-[(5-phosphoribosylamino)methylideneamino] imidazole-4-carboxamide isomerase.